Consider the following 284-residue polypeptide: uncharacterized protein (284 aa).

Helical transmembrane passes span 174–194 (LFVL…YISI), 217–237 (MLIP…PGTA), and 241–261 (LIVL…SGSC).

The protein localises to the membrane. This is an uncharacterized protein from Saccharomyces cerevisiae (strain ATCC 204508 / S288c) (Baker's yeast).